Here is a 119-residue protein sequence, read N- to C-terminus: Small ribosomal subunit protein uS10 (119 aa).

Alanine 2 carries the post-translational modification N-acetylalanine. Lysine 4 participates in a covalent cross-link: Glycyl lysine isopeptide (Lys-Gly) (interchain with G-Cter in ubiquitin). Lysine 8 is modified (N6-succinyllysine; alternate). Lysine 8 participates in a covalent cross-link: Glycyl lysine isopeptide (Lys-Gly) (interchain with G-Cter in ubiquitin); alternate. At threonine 9 the chain carries Phosphothreonine. 2 positions are modified to N6-acetyllysine: lysine 34 and lysine 75. Serine 93 bears the Phosphoserine mark.

It belongs to the universal ribosomal protein uS10 family. In terms of assembly, component of the 40S small ribosomal subunit. Polyubiquitinated by ZNF598 via 'Lys-63'-linked ubiquitin chains when a ribosome has stalled, initiating the ribosome quality control (RQC) pathway to degrade the potentially detrimental aberrant nascent polypeptide. Deubiquitinated by OTUD3 and USP21, antagonizing ZNF598 activity. In terms of processing, ufmylated by UFL1.

Its subcellular location is the cytoplasm. Its function is as follows. Component of the small ribosomal subunit. The ribosome is a large ribonucleoprotein complex responsible for the synthesis of proteins in the cell. The chain is Small ribosomal subunit protein uS10 (RPS20) from Pongo abelii (Sumatran orangutan).